The chain runs to 577 residues: Glycine--tRNA ligase (577 aa).

Positions 98 and 164 each coordinate substrate. ATP-binding positions include 196 to 198, 206 to 211, 328 to 329, and 451 to 454; these read RNE, IRLREF, EC, and GIDR. Residue 211-215 participates in substrate binding; that stretch reads FTQAE. 447–451 provides a ligand contact to substrate; sequence EPSYG.

This sequence belongs to the class-II aminoacyl-tRNA synthetase family.

It localises to the cytoplasm. The catalysed reaction is tRNA(Gly) + glycine + ATP = glycyl-tRNA(Gly) + AMP + diphosphate. Functionally, catalyzes the attachment of glycine to tRNA(Gly). This chain is Glycine--tRNA ligase, found in Methanocaldococcus jannaschii (strain ATCC 43067 / DSM 2661 / JAL-1 / JCM 10045 / NBRC 100440) (Methanococcus jannaschii).